The sequence spans 121 residues: ATP synthase epsilon chain (121 aa).

This sequence belongs to the ATPase epsilon chain family. As to quaternary structure, F-type ATPases have 2 components, CF(1) - the catalytic core - and CF(0) - the membrane proton channel. CF(1) has five subunits: alpha(3), beta(3), gamma(1), delta(1), epsilon(1). CF(0) has three main subunits: a, b and c.

The protein resides in the cell membrane. Functionally, produces ATP from ADP in the presence of a proton gradient across the membrane. This chain is ATP synthase epsilon chain (atpC), found in Mycobacterium bovis (strain ATCC BAA-935 / AF2122/97).